A 161-amino-acid polypeptide reads, in one-letter code: Allophycocyanin beta chain (161 aa).

Position 71 is an N4-methylasparagine (N71). A (2R,3E)-phycocyanobilin-binding site is contributed by C81.

Belongs to the phycobiliprotein family. In terms of assembly, heterodimer of an alpha and a beta chain. Post-translationally, contains one covalently linked phycocyanobilin chromophore.

The protein localises to the plastid. The protein resides in the chloroplast thylakoid membrane. In terms of biological role, light-harvesting photosynthetic bile pigment-protein from the phycobiliprotein complex. Allophycocyanin has a maximum absorption at approximately 650 nanometers. The chain is Allophycocyanin beta chain (apcB) from Pyropia haitanensis (Red seaweed).